Consider the following 252-residue polypeptide: Aquaporin TIP4-4 (252 aa).

2 helical membrane-spanning segments follow: residues 20 to 40 (AVLA…GSAM) and 53 to 73 (VVGL…MVSA). Residues 83 to 85 (NPA) carry the NPA 1 motif. The next 3 membrane-spanning stretches (helical) occupy residues 105 to 125 (VAAQ…LAVA), 143 to 163 (GVLM…ATVV), and 168 to 188 (AVGG…VLAG). The NPA 2 motif lies at 197 to 199 (NPA). The helical transmembrane segment at 216-236 (VYWVGPLIGGPLAGLVYDGLF) threads the bilayer.

The protein belongs to the MIP/aquaporin (TC 1.A.8) family. TIP (TC 1.A.8.10) subfamily.

Its subcellular location is the vacuole membrane. Functionally, aquaporins facilitate the transport of water and small neutral solutes across cell membranes. The sequence is that of Aquaporin TIP4-4 (TIP4-4) from Zea mays (Maize).